Here is a 591-residue protein sequence, read N- to C-terminus: V-type ATP synthase alpha chain (591 aa).

Position 233–240 (233–240 (GPFGAGKT)) interacts with ATP.

It belongs to the ATPase alpha/beta chains family.

The catalysed reaction is ATP + H2O + 4 H(+)(in) = ADP + phosphate + 5 H(+)(out). Produces ATP from ADP in the presence of a proton gradient across the membrane. The V-type alpha chain is a catalytic subunit. This is V-type ATP synthase alpha chain from Streptococcus pyogenes serotype M49 (strain NZ131).